Here is a 251-residue protein sequence, read N- to C-terminus: Triosephosphate isomerase (251 aa).

A substrate-binding site is contributed by 9-11 (NWK). Histidine 95 (electrophile) is an active-site residue. The active-site Proton acceptor is glutamate 167. Residues glycine 173, serine 213, and 234–235 (GG) contribute to the substrate site.

This sequence belongs to the triosephosphate isomerase family. In terms of assembly, homodimer.

It is found in the cytoplasm. It catalyses the reaction D-glyceraldehyde 3-phosphate = dihydroxyacetone phosphate. Its pathway is carbohydrate biosynthesis; gluconeogenesis. It participates in carbohydrate degradation; glycolysis; D-glyceraldehyde 3-phosphate from glycerone phosphate: step 1/1. Functionally, involved in the gluconeogenesis. Catalyzes stereospecifically the conversion of dihydroxyacetone phosphate (DHAP) to D-glyceraldehyde-3-phosphate (G3P). The polypeptide is Triosephosphate isomerase (Enterococcus faecalis (strain ATCC 700802 / V583)).